A 356-amino-acid chain; its full sequence is sn-glycerol-3-phosphate import ATP-binding protein UgpC (356 aa).

One can recognise an ABC transporter domain in the interval 4-235; it reads LKLQAVTKSW…PASRFVASFI (232 aa). An ATP-binding site is contributed by 37–44; sequence GPSGCGKS.

The protein belongs to the ABC transporter superfamily. sn-glycerol-3-phosphate importer (TC 3.A.1.1.3) family. The complex is composed of two ATP-binding proteins (UgpC), two transmembrane proteins (UgpA and UgpE) and a solute-binding protein (UgpB).

It is found in the cell inner membrane. It carries out the reaction sn-glycerol 3-phosphate(out) + ATP + H2O = sn-glycerol 3-phosphate(in) + ADP + phosphate + H(+). Functionally, part of the ABC transporter complex UgpBAEC involved in sn-glycerol-3-phosphate (G3P) import. Responsible for energy coupling to the transport system. The protein is sn-glycerol-3-phosphate import ATP-binding protein UgpC of Salmonella choleraesuis (strain SC-B67).